Consider the following 246-residue polypeptide: Uridylate kinase (246 aa).

K18–G21 contributes to the ATP binding site. G60 serves as a coordination point for UMP. Positions 61 and 65 each coordinate ATP. Residues D80 and T141 to T148 each bind UMP. Residues T168, Q169, Y174, and D177 each coordinate ATP.

Belongs to the UMP kinase family. As to quaternary structure, homohexamer.

Its subcellular location is the cytoplasm. It carries out the reaction UMP + ATP = UDP + ADP. It participates in pyrimidine metabolism; CTP biosynthesis via de novo pathway; UDP from UMP (UMPK route): step 1/1. With respect to regulation, inhibited by UTP. Functionally, catalyzes the reversible phosphorylation of UMP to UDP. This is Uridylate kinase from Granulibacter bethesdensis (strain ATCC BAA-1260 / CGDNIH1).